The sequence spans 385 residues: MFKKTKITILGATGSIGDSTLAVIRETNDFEVFALTAFSNVEKLAELCQEFKPKFAVVPDLSKKQKLQSLVTDVEVLVGESGLEKVSSLAEIDIVMSAIVGIAGLKPTFAAAKAGKKILLANKESLVTAGHLLIDEVVKNNAQLIPVDSEHNAIFQCIDNHDKKCLPEIDKIILTASGGPFRDKQLHELTDVTPEQACNHPNWQMGRKISVDSSTMVNKALEVIEAYWLFSVSADKIGVLIHPQSVTHSIVRYVDGSYIAQLGVPDMKTPIANAMYYPKRGSVNVESLDFTKYQLTFREACFERFEALKIVFNNLQNKNYAANIVFNAANEELVAAFLNKKIKYLEIIEVNKKVTKELNFENPKNIEEVFEIDRKTREYVDSVLG.

Positions 13, 14, 15, 16, 40, and 122 each coordinate NADPH. Lys-123 provides a ligand contact to 1-deoxy-D-xylulose 5-phosphate. Residue Glu-124 participates in NADPH binding. Mn(2+) is bound at residue Asp-148. Residues Ser-149, Glu-150, Ser-177, and His-200 each contribute to the 1-deoxy-D-xylulose 5-phosphate site. Residue Glu-150 coordinates Mn(2+). Gly-206 provides a ligand contact to NADPH. Residues Ser-213, Asn-218, Lys-219, and Glu-222 each coordinate 1-deoxy-D-xylulose 5-phosphate. Glu-222 contributes to the Mn(2+) binding site.

It belongs to the DXR family. Mg(2+) serves as cofactor. The cofactor is Mn(2+).

The enzyme catalyses 2-C-methyl-D-erythritol 4-phosphate + NADP(+) = 1-deoxy-D-xylulose 5-phosphate + NADPH + H(+). The protein operates within isoprenoid biosynthesis; isopentenyl diphosphate biosynthesis via DXP pathway; isopentenyl diphosphate from 1-deoxy-D-xylulose 5-phosphate: step 1/6. In terms of biological role, catalyzes the NADPH-dependent rearrangement and reduction of 1-deoxy-D-xylulose-5-phosphate (DXP) to 2-C-methyl-D-erythritol 4-phosphate (MEP). The sequence is that of 1-deoxy-D-xylulose 5-phosphate reductoisomerase from Francisella tularensis subsp. holarctica (strain FTNF002-00 / FTA).